We begin with the raw amino-acid sequence, 222 residues long: PKHD-type hydroxylase cce_3668 (222 aa).

One can recognise a Fe2OG dioxygenase domain in the interval 78–175; the sequence is HIHSLRFSRY…RLVVVGWVHS (98 aa). Residues H96, D98, and H156 each coordinate Fe cation. Position 166 (R166) interacts with 2-oxoglutarate.

It depends on Fe(2+) as a cofactor. L-ascorbate serves as cofactor.

This Crocosphaera subtropica (strain ATCC 51142 / BH68) (Cyanothece sp. (strain ATCC 51142)) protein is PKHD-type hydroxylase cce_3668.